The chain runs to 308 residues: Probable manganese-dependent inorganic pyrophosphatase (308 aa).

Residues His-9, Asp-13, Asp-15, Asp-75, His-97, and Asp-149 each coordinate Mn(2+).

This sequence belongs to the PPase class C family. Mn(2+) is required as a cofactor.

The protein localises to the cytoplasm. The catalysed reaction is diphosphate + H2O = 2 phosphate + H(+). This chain is Probable manganese-dependent inorganic pyrophosphatase, found in Staphylococcus carnosus (strain TM300).